The chain runs to 124 residues: Glutaredoxin-2 (124 aa).

Residues C13 and C16 are joined by a disulfide bond.

The protein belongs to the glutaredoxin family. As to quaternary structure, homodimer.

The protein localises to the host cytoplasm. In terms of biological role, glutaredoxin necessary for virion morphogenesis and virus replication. Functions as a thiol-disulfide transfer protein between membrane-associated OPG128 and substrates OPG095 or OPG053. The complete pathway for formation of disulfide bonds in intracellular virion membrane proteins sequentially involves oxidation of OPG072, OPG128 and OPG088. Exhibit thioltransferase and dehydroascorbate reductase activities in vitro. The sequence is that of Glutaredoxin-2 (OPG088) from Oryctolagus cuniculus (Rabbit).